A 275-amino-acid polypeptide reads, in one-letter code: Large ribosomal subunit protein uL2 (275 aa).

2 disordered regions span residues 222 to 243 and 256 to 275; these read GSVM…PIGR and GGKT…KRKP.

This sequence belongs to the universal ribosomal protein uL2 family. Part of the 50S ribosomal subunit. Forms a bridge to the 30S subunit in the 70S ribosome.

In terms of biological role, one of the primary rRNA binding proteins. Required for association of the 30S and 50S subunits to form the 70S ribosome, for tRNA binding and peptide bond formation. It has been suggested to have peptidyltransferase activity; this is somewhat controversial. Makes several contacts with the 16S rRNA in the 70S ribosome. The chain is Large ribosomal subunit protein uL2 from Syntrophomonas wolfei subsp. wolfei (strain DSM 2245B / Goettingen).